The sequence spans 261 residues: Cytochrome c oxidase subunit 3 (261 aa).

At 1–15 the chain is on the mitochondrial matrix side; that stretch reads MTHQTHAYHTVNPSP. Residues 16 to 34 traverse the membrane as a helical segment; it reads WPLTGALSALLMTSGLIMW. Residues 35 to 40 are Mitochondrial intermembrane-facing; that stretch reads FHFNSP. Residues 41 to 66 form a helical membrane-spanning segment; it reads LLLVLGLTTNFLTMYQWWRDIIREST. The Mitochondrial matrix portion of the chain corresponds to 67-72; that stretch reads FQGHHT. The helical transmembrane segment at 73 to 105 threads the bilayer; it reads TIVQKGLRYGMILFIVSEVFFFAGFFWAFYHSS. At 106–128 the chain is on the mitochondrial intermembrane side; sequence LAPTPELGGCWPPTGINPLNPLE. A helical transmembrane segment spans residues 129-152; that stretch reads VPLLNTSVLLASGVSITWAHHSLM. Topologically, residues 153–155 are mitochondrial matrix; the sequence is EGH. The chain crosses the membrane as a helical span at residues 156-183; the sequence is RKHMLQALFITIALGVYFTLLQASEYYE. Residues 184–190 lie on the Mitochondrial intermembrane side of the membrane; the sequence is APFTISD. The chain crosses the membrane as a helical span at residues 191–223; sequence GIYGSTFFVATGFHGLHVIIGSSFLIVCFMRQL. Residues 224 to 232 are Mitochondrial matrix-facing; the sequence is KFHFTSSHH. The chain crosses the membrane as a helical span at residues 233 to 256; sequence FGFEAAAWYWHFVDVVWLFLYVSI. The Mitochondrial intermembrane portion of the chain corresponds to 257 to 261; the sequence is YWWGS.

This sequence belongs to the cytochrome c oxidase subunit 3 family. Component of the cytochrome c oxidase (complex IV, CIV), a multisubunit enzyme composed of 14 subunits. The complex is composed of a catalytic core of 3 subunits MT-CO1, MT-CO2 and MT-CO3, encoded in the mitochondrial DNA, and 11 supernumerary subunits COX4I, COX5A, COX5B, COX6A, COX6B, COX6C, COX7A, COX7B, COX7C, COX8 and NDUFA4, which are encoded in the nuclear genome. The complex exists as a monomer or a dimer and forms supercomplexes (SCs) in the inner mitochondrial membrane with NADH-ubiquinone oxidoreductase (complex I, CI) and ubiquinol-cytochrome c oxidoreductase (cytochrome b-c1 complex, complex III, CIII), resulting in different assemblies (supercomplex SCI(1)III(2)IV(1) and megacomplex MCI(2)III(2)IV(2)).

It is found in the mitochondrion inner membrane. It carries out the reaction 4 Fe(II)-[cytochrome c] + O2 + 8 H(+)(in) = 4 Fe(III)-[cytochrome c] + 2 H2O + 4 H(+)(out). Its function is as follows. Component of the cytochrome c oxidase, the last enzyme in the mitochondrial electron transport chain which drives oxidative phosphorylation. The respiratory chain contains 3 multisubunit complexes succinate dehydrogenase (complex II, CII), ubiquinol-cytochrome c oxidoreductase (cytochrome b-c1 complex, complex III, CIII) and cytochrome c oxidase (complex IV, CIV), that cooperate to transfer electrons derived from NADH and succinate to molecular oxygen, creating an electrochemical gradient over the inner membrane that drives transmembrane transport and the ATP synthase. Cytochrome c oxidase is the component of the respiratory chain that catalyzes the reduction of oxygen to water. Electrons originating from reduced cytochrome c in the intermembrane space (IMS) are transferred via the dinuclear copper A center (CU(A)) of subunit 2 and heme A of subunit 1 to the active site in subunit 1, a binuclear center (BNC) formed by heme A3 and copper B (CU(B)). The BNC reduces molecular oxygen to 2 water molecules using 4 electrons from cytochrome c in the IMS and 4 protons from the mitochondrial matrix. The chain is Cytochrome c oxidase subunit 3 (MT-CO3) from Dasypus novemcinctus (Nine-banded armadillo).